Reading from the N-terminus, the 167-residue chain is Protein-export protein SecB (167 aa).

This sequence belongs to the SecB family. In terms of assembly, homotetramer, a dimer of dimers. One homotetramer interacts with 1 SecA dimer.

The protein resides in the cytoplasm. Its function is as follows. One of the proteins required for the normal export of preproteins out of the cell cytoplasm. It is a molecular chaperone that binds to a subset of precursor proteins, maintaining them in a translocation-competent state. It also specifically binds to its receptor SecA. In Wolbachia pipientis subsp. Culex pipiens (strain wPip), this protein is Protein-export protein SecB.